The primary structure comprises 213 residues: Adenylate kinase (213 aa).

Residue 10 to 15 coordinates ATP; it reads GSGKGT. Residues 30-59 form an NMP region; sequence SVGDLLRNIISSSSELGKKIKGTVESGNLI. AMP contacts are provided by residues Arg-36, 57-59, 83-86, and Gln-90; these read NLI and GFPR. The interval 125–160 is LID; it reads NRLACLDCKSIYSVSSFKSTTCAKCKSTRLEKRIDD. Arg-126 contributes to the ATP binding site. The Zn(2+) site is built by Cys-129 and Cys-132. An ATP-binding site is contributed by 135-136; it reads IY. Zn(2+)-binding residues include Cys-146 and Cys-149. Arg-157 and Arg-169 together coordinate AMP. Residue Leu-195 coordinates ATP.

The protein belongs to the adenylate kinase family. In terms of assembly, monomer.

It localises to the cytoplasm. It catalyses the reaction AMP + ATP = 2 ADP. Its pathway is purine metabolism; AMP biosynthesis via salvage pathway; AMP from ADP: step 1/1. In terms of biological role, catalyzes the reversible transfer of the terminal phosphate group between ATP and AMP. Plays an important role in cellular energy homeostasis and in adenine nucleotide metabolism. This is Adenylate kinase from Wolbachia sp. subsp. Drosophila simulans (strain wRi).